We begin with the raw amino-acid sequence, 459 residues long: FBD-associated F-box protein At4g13985 (459 aa).

Residues 18–64 form the F-box domain; sequence VDRLRNLPDCLLFKILLNLPTKDVVKLSVLSRRWRNVWRYVPGLDLE. One can recognise an FBD domain in the interval 375-429; the sequence is KEGANILPGPRRFLTSLEYVKIAKPMAAEASEIKLKLVSYFLENSTILKKLTLCL.

In Arabidopsis thaliana (Mouse-ear cress), this protein is FBD-associated F-box protein At4g13985.